Reading from the N-terminus, the 570-residue chain is Grayanic acid biosynthesis cluster cytochrome P450 monooxygenase (570 aa).

A helical membrane pass occupies residues 9-29 (ILTIFWLPIAAAXLYGAGLAI). Asparagine 191 carries N-linked (GlcNAc...) asparagine glycosylation. Cysteine 510 provides a ligand contact to heme.

The protein belongs to the cytochrome P450 family. Heme serves as cofactor.

The protein localises to the membrane. The protein operates within secondary metabolite biosynthesis. Non-reducing polyketide synthase; part of the gene cluster that mediates the biosynthesis of orcinol depsidone grayanic acid (GRA), the only major secondary metabolite known in C.grayi. The first step consists in the ring and depside synthesis by PKS16 leading to 4-O-demethylsphaerophorin, involving different orcinol-like rings, one with acetyl CoA and the other with octanoyl CoA as the starter. Further depsidone formation by the GRA cluster-specific cytochrome P450 leads to 4-O-demethylgrayanic acid. Finally, the cluster specific O-methyltransferase probably converts the 4-O-demethylgrayanic acid into grayanic acid. The chain is Grayanic acid biosynthesis cluster cytochrome P450 monooxygenase from Cladonia grayi (Gray's cup lichen).